The chain runs to 722 residues: Transcription factor kayak, isoforms D/sro (722 aa).

Over residues 173-188 (QHQTQQQHQSQQQQQH) the composition is skewed to low complexity. 3 disordered regions span residues 173–193 (QHQT…RQDY), 283–317 (LGQG…HTDS), and 350–407 (GSAS…KRRV). Polar residues predominate over residues 283 to 300 (LGQGSESEDSNASYNDTQ). Low complexity-rich tracts occupy residues 308–317 (TDTSSAHTDS) and 350–364 (GSAS…TSNT). In terms of domain architecture, bZIP spans 385-448 (EQKRAVRRER…NQLEYLLATH (64 aa)). The basic motif stretch occupies residues 387–406 (KRAVRRERNKQAAARCRKRR). Residues 413-420 (LTEEVEQL) are leucine-zipper. Low complexity predominate over residues 477 to 498 (AGSSGSGASSHHNHNSNDSSNG). 2 disordered regions span residues 477 to 519 (AGSS…PLDL) and 683 to 722 (DGGT…LVSL). The span at 506–516 (TLNSTGRSNSP) shows a compositional bias: polar residues. Ser515 is subject to Phosphoserine.

This sequence belongs to the bZIP family. Fos subfamily. As to quaternary structure, homodimer. Heterodimer with Jra. The kay-Jra heterodimer binds more stably to the AP-1 site than either of the two proteins alone.

The protein resides in the nucleus. Its function is as follows. Developmentally regulated transcription factor AP-1 binds and recognizes the enhancer DNA sequence: 5'-TGA[CG]TCA-3'. May play a role in the function or determination of a particular subset of cells in the developing embryo. It is able to carry out its function either independently of or in conjunction with Jra. The polypeptide is Transcription factor kayak, isoforms D/sro (Drosophila melanogaster (Fruit fly)).